A 2561-amino-acid chain; its full sequence is Plipastatin synthase subunit A (2561 aa).

Residues 1–1038 (MSEHTYSLTH…ATVIREGTDS (1038 aa)) form a domain 1 (glutamate-activating) region. Positions 2 to 300 (SEHTYSLTHA…SSLPIRITVD (299 aa)) are condensation 1. Residues 485 to 888 (TYAELDMYAS…SIEGVREAAV (404 aa)) form an adenylation 1 region. The 76-residue stretch at 961 to 1036 (APRNVTEMKL…GLATVIREGT (76 aa)) folds into the Carrier 1 domain. Serine 996 bears the O-(pantetheine 4'-phosphoryl)serine mark. The segment at 1048 to 1338 (KQETYPVSSA…NTLALRTRPE (291 aa)) is condensation 2. A domain 2 (D-ornithine-activating) region spans residues 1048 to 2554 (KQETYPVSSA…ELTLSALSSI (1507 aa)). Residues 1525-1932 (SYRLLNERAN…QTGLVREAAV (408 aa)) form an adenylation 2 region. Residues 2007-2081 (APVNDLQKTM…ELCGHITPLA (75 aa)) enclose the Carrier 2 domain. The residue at position 2042 (serine 2042) is an O-(pantetheine 4'-phosphoryl)serine. The interval 2089 to 2554 (AEGEAELTPI…ELTLSALSSI (466 aa)) is epimerization.

This sequence belongs to the ATP-dependent AMP-binding enzyme family. Pantetheine 4'-phosphate serves as cofactor.

In terms of biological role, this protein is a multifunctional enzyme, able to activate and polymerize the amino acids Glu and Orn as part of the biosynthesis of the lipopeptide antibiotic lipastatin. The Orn residue is further epimerized to the D-isomer form. The activation sites for these amino acids consist of individual domains. The sequence is that of Plipastatin synthase subunit A (ppsA) from Bacillus subtilis (strain 168).